We begin with the raw amino-acid sequence, 906 residues long: Ectonucleotide pyrophosphatase/phosphodiesterase family member 1 (906 aa).

The tract at residues 1-22 (MERDGDQAGHGPRHGSAGNGRE) is disordered. Residues 1–58 (MERDGDQAGHGPRHGSAGNGRELESPAAASLLAPMDLGEEPLEKAERARPAKDPNTYK) lie on the Cytoplasmic side of the membrane. Phosphoserine is present on S25. The Di-leucine motif signature appears at 27-34 (AAASLLAP). Residues 59 to 79 (VLSLVLSVCVLTTILGCIFGL) form a helical; Signal-anchor for type II membrane protein membrane-spanning segment. The Extracellular segment spans residues 80 to 906 (KPSCAKEVKS…THLPIFSQED (827 aa)). SMB domains lie at 86–126 (EVKS…VEPT) and 127–171 (HIWT…DKKS). Disulfide bonds link C90–C104, C94–C122, C102–C115, C108–C114, C131–C148, C136–C166, C146–C159, C152–C158, C177–C223, and C185–C397. An N-linked (GlcNAc...) asparagine glycan is attached at N161. The phosphodiesterase stretch occupies residues 173–573 (VEETCESIDT…APNNGSHGSL (401 aa)). D200, T238, and N259 together coordinate AMP. Zn(2+)-binding residues include D200 and T238. T238 (AMP-threonine intermediate) is an active-site residue. T238 and N259 together coordinate CMP. T238 and N259 together coordinate dTMP. The GMP site is built by T238 and N259. The residue at position 238 (T238) is a Phosphothreonine. A glycan (N-linked (GlcNAc...) asparagine) is linked at N267. The GMP site is built by L272, K277, and Y322. 2 residues coordinate AMP: K277 and Y322. Residues K277 and Y322 each contribute to the CMP site. Y322 lines the dTMP pocket. N323 carries N-linked (GlcNAc...) asparagine glycosylation. Residue D358 participates in AMP binding. D358, H362, D405, and H406 together coordinate Zn(2+). CMP is bound at residue D358. D358 lines the dTMP pocket. D358 is a binding site for GMP. H362 contributes to the 2',3'-cGAMP binding site. H406 serves as a coordination point for AMP. Residue H406 participates in CMP binding. H406 contributes to the dTMP binding site. Residue H406 coordinates GMP. 6 cysteine pairs are disulfide-bonded: C413–C512, C462–C849, C596–C653, C607–C707, C609–C692, and C819–C829. The N-linked (GlcNAc...) asparagine glycan is linked to N459. Residue S514 coordinates 2',3'-cGAMP. H517 serves as a coordination point for AMP. Residue H517 coordinates Zn(2+). H517 provides a ligand contact to CMP. H517 lines the dTMP pocket. H517 is a binding site for GMP. N-linked (GlcNAc...) asparagine glycans are attached at residues N567 and N624. Residues 579–628 (KPIYNPSHPKEEGFLSQCPIKSTSNDLGCTCDPWIVPIKDFEKQLNLTTE) form a linker region. The tract at residues 635–906 (HMTVPYGRPR…THLPIFSQED (272 aa)) is nuclease-like domain. D781, D783, D785, R787, and D789 together coordinate Ca(2+).

The protein belongs to the nucleotide pyrophosphatase/phosphodiesterase family. Ectonucleotide pyrophosphatase/phosphodiesterase family member 1: Homodimer. Ectonucleotide pyrophosphatase/phosphodiesterase family member 1: Interacts with INSR; leading to inhibit INSR autophosphorylation and subsequent activation of INSR kinase activity. Ectonucleotide pyrophosphatase/phosphodiesterase family member 1, secreted form: Monomeric. Zn(2+) is required as a cofactor. In terms of processing, N-glycosylated. The secreted form is produced through cleavage at Lys-85 by intracellular processing. Selectively expressed on the surface of antibody-secreting cells. Expressed in osteocytes and osteoclasts.

The protein localises to the cell membrane. It localises to the basolateral cell membrane. It is found in the secreted. It carries out the reaction Hydrolytically removes 5'-nucleotides successively from the 3'-hydroxy termini of 3'-hydroxy-terminated oligonucleotides.. It catalyses the reaction a ribonucleoside 5'-triphosphate + H2O = a ribonucleoside 5'-phosphate + diphosphate + H(+). The catalysed reaction is ATP + H2O = AMP + diphosphate + H(+). The enzyme catalyses UTP + H2O = UMP + diphosphate + H(+). It carries out the reaction GTP + H2O = GMP + diphosphate + H(+). It catalyses the reaction CTP + H2O = CMP + diphosphate + H(+). The catalysed reaction is 2',3'-cGAMP + 2 H2O = GMP + AMP + 2 H(+). The enzyme catalyses P(1),P(4)-bis(5'-adenosyl) tetraphosphate + H2O = AMP + ATP + 2 H(+). It carries out the reaction 3',5'-cyclic AMP + H2O = AMP + H(+). With respect to regulation, at low concentrations of ATP, a phosphorylated intermediate is formed which inhibits further hydrolysis. Nucleotide pyrophosphatase that generates diphosphate (PPi) and functions in bone mineralization and soft tissue calcification by regulating pyrophosphate levels. PPi inhibits bone mineralization and soft tissue calcification by binding to nascent hydroxyapatite crystals, thereby preventing further growth of these crystals. Preferentially hydrolyzes ATP, but can also hydrolyze other nucleoside 5' triphosphates such as GTP, CTP and UTP to their corresponding monophosphates with release of pyrophosphate, as well as diadenosine polyphosphates, and also 3',5'-cAMP to AMP. May also be involved in the regulation of the availability of nucleotide sugars in the endoplasmic reticulum and Golgi, and the regulation of purinergic signaling. Inhibits ectopic joint calcification and maintains articular chondrocytes by repressing hedgehog signaling; it is however unclear whether hedgehog inhibition is direct or indirect. Appears to modulate insulin sensitivity. Also involved in melanogenesis. Also able to hydrolyze 2',3'-cGAMP (cyclic GMP-AMP), a second messenger that activates TMEM173/STING and triggers type-I interferon production. 2',3'-cGAMP degradation takes place in the lumen or extracellular space, and not in the cytosol where it is produced; the role of 2',3'-cGAMP hydrolysis is therefore unclear. Not able to hydrolyze the 2',3'-cGAMP linkage isomer 3',3'-cGAMP. This chain is Ectonucleotide pyrophosphatase/phosphodiesterase family member 1, found in Mus musculus (Mouse).